Consider the following 399-residue polypeptide: S-adenosylmethionine synthase (399 aa).

Histidine 16 is a binding site for ATP. Aspartate 18 provides a ligand contact to Mg(2+). Glutamate 44 lines the K(+) pocket. Glutamate 57 and glutamine 100 together coordinate L-methionine. A flexible loop region spans residues 100-110 (QSSDIAQGVNE). ATP is bound by residues 177–179 (DAK), 244–245 (RF), aspartate 253, 259–260 (RK), alanine 276, and lysine 280. Aspartate 253 contributes to the L-methionine binding site. Residue lysine 284 coordinates L-methionine.

The protein belongs to the AdoMet synthase family. As to quaternary structure, homotetramer; dimer of dimers. Mg(2+) is required as a cofactor. Requires K(+) as cofactor.

It localises to the cytoplasm. The catalysed reaction is L-methionine + ATP + H2O = S-adenosyl-L-methionine + phosphate + diphosphate. The protein operates within amino-acid biosynthesis; S-adenosyl-L-methionine biosynthesis; S-adenosyl-L-methionine from L-methionine: step 1/1. In terms of biological role, catalyzes the formation of S-adenosylmethionine (AdoMet) from methionine and ATP. The overall synthetic reaction is composed of two sequential steps, AdoMet formation and the subsequent tripolyphosphate hydrolysis which occurs prior to release of AdoMet from the enzyme. In Lactococcus lactis subsp. lactis (strain IL1403) (Streptococcus lactis), this protein is S-adenosylmethionine synthase.